Reading from the N-terminus, the 350-residue chain is Kelch domain-containing protein 8A (350 aa).

7 Kelch repeats span residues 1–31, 32–79, 81–127, 128–175, 176–222, 224–278, and 279–326; these read MEVP…ETGG, QVYA…ALGK, IMVI…AKDY, RVYA…LRGS, KIYV…TLDN, LYSL…GLSG, and RVIV…VFKN.

This Mus musculus (Mouse) protein is Kelch domain-containing protein 8A (Klhdc8a).